The sequence spans 381 residues: Testis-specific expressed protein 55 (381 aa).

Disordered stretches follow at residues 1–176 (MDEP…SDPH) and 292–317 (TTEYTSDTTPVFDQGRSSQRSSQSSR). Composition is skewed to basic and acidic residues over residues 8 to 24 (SLNHENTTRAPDNEKNN) and 65 to 103 (RTSEEAEQRSSQPTEHRLPGHAERRASQQAERRLSERRT). Positions 104 to 113 (SQPPNQQLPS) are enriched in polar residues. Over residues 114–125 (HSERKTSGKIDG) the composition is skewed to basic and acidic residues. Acidic residues predominate over residues 134–143 (TDQETSEFDD). 2 stretches are compositionally biased toward polar residues: residues 147–163 (SASTDYLSARSQQQEYN) and 292–302 (TTEYTSDTTPV). Positions 307–317 (RSSQRSSQSSR) are enriched in low complexity.

In terms of tissue distribution, testis-specific.

It is found in the nucleus. The polypeptide is Testis-specific expressed protein 55 (Mus musculus (Mouse)).